The following is a 400-amino-acid chain: Dual specificity mitogen-activated protein kinase kinase 2 (400 aa).

Met-1 is modified (N-acetylmethionine). Phosphoserine is present on Ser-23. In terms of domain architecture, Protein kinase spans 72–369; the sequence is FERISELGAG…LKMLMSHTFI (298 aa). Residues 78–86 and Lys-101 contribute to the ATP site; that span reads LGAGNGGVV. The active-site Proton acceptor is Asp-194. Ser-222 carries the phosphoserine; by RAF modification. Phosphoserine occurs at positions 226, 293, 295, and 306. Residues 288–309 form a disordered region; sequence EGEPHSISPRPRPPGRPISGHG. Thr-394 and Thr-396 each carry phosphothreonine.

It belongs to the protein kinase superfamily. STE Ser/Thr protein kinase family. MAP kinase kinase subfamily. In terms of assembly, interacts with MORG1. Interacts with SGK1. Interacts with KSR1. Interacts with KSR1 and BRAF; the interaction with KSR1 mediates KSR1-BRAF dimerization. Interacts with GLS. Requires Mg(2+) as cofactor. Post-translationally, MAPKK is itself dependent on Ser/Thr phosphorylation for activity catalyzed by MAP kinase kinase kinases (RAF or MEKK1).

It localises to the cytoplasm. The protein resides in the membrane. It carries out the reaction L-seryl-[protein] + ATP = O-phospho-L-seryl-[protein] + ADP + H(+). It catalyses the reaction L-threonyl-[protein] + ATP = O-phospho-L-threonyl-[protein] + ADP + H(+). The enzyme catalyses L-tyrosyl-[protein] + ATP = O-phospho-L-tyrosyl-[protein] + ADP + H(+). In terms of biological role, catalyzes the concomitant phosphorylation of a threonine and a tyrosine residue in a Thr-Glu-Tyr sequence located in MAP kinases. Activates the ERK1 and ERK2 MAP kinases. Activates BRAF in a KSR1 or KSR2-dependent manner; by binding to KSR1 or KSR2 releases the inhibitory intramolecular interaction between KSR1 or KSR2 protein kinase and N-terminal domains which promotes KSR1 or KSR2-BRAF dimerization and BRAF activation. The polypeptide is Dual specificity mitogen-activated protein kinase kinase 2 (MAP2K2) (Canis lupus familiaris (Dog)).